A 99-amino-acid chain; its full sequence is Aspartyl/glutamyl-tRNA(Asn/Gln) amidotransferase subunit C (99 aa).

Belongs to the GatC family. In terms of assembly, heterotrimer of A, B and C subunits.

It catalyses the reaction L-glutamyl-tRNA(Gln) + L-glutamine + ATP + H2O = L-glutaminyl-tRNA(Gln) + L-glutamate + ADP + phosphate + H(+). The catalysed reaction is L-aspartyl-tRNA(Asn) + L-glutamine + ATP + H2O = L-asparaginyl-tRNA(Asn) + L-glutamate + ADP + phosphate + 2 H(+). Its function is as follows. Allows the formation of correctly charged Asn-tRNA(Asn) or Gln-tRNA(Gln) through the transamidation of misacylated Asp-tRNA(Asn) or Glu-tRNA(Gln) in organisms which lack either or both of asparaginyl-tRNA or glutaminyl-tRNA synthetases. The reaction takes place in the presence of glutamine and ATP through an activated phospho-Asp-tRNA(Asn) or phospho-Glu-tRNA(Gln). The sequence is that of Aspartyl/glutamyl-tRNA(Asn/Gln) amidotransferase subunit C from Burkholderia cenocepacia (strain ATCC BAA-245 / DSM 16553 / LMG 16656 / NCTC 13227 / J2315 / CF5610) (Burkholderia cepacia (strain J2315)).